Reading from the N-terminus, the 1164-residue chain is FH1/FH2 domain-containing protein 1 (1164 aa).

The region spanning 53 to 458 (AQIPAVHRLL…AAETEKQVAL (406 aa)) is the GBD/FH3 domain. Disordered regions lie at residues 340-411 (DIEE…VGPP) and 470-500 (MPNE…QSPA). A compositionally biased stretch (basic and acidic residues) spans 355-368 (KPSSEEGKRSRRSL). Serine 367 carries the phosphoserine modification. The segment covering 402 to 411 (GPASSPVGPP) has biased composition (low complexity). Position 486 is a phosphoserine (serine 486). One can recognise an FH1 domain in the interval 487-615 (PETAPAARTP…LAAPLPHSVP (129 aa)). Threonine 495 is subject to Phosphothreonine. Phosphoserine is present on residues serine 498, serine 523, and serine 573. A disordered region spans residues 566–619 (GKDIPAPSPPLPLLSGVPPPPPLPPPPPIKGPFPPPPPLPLAAPLPHSVPDSSA). Residues 571–608 (APSPPLPLLSGVPPPPPLPPPPPIKGPFPPPPPLPLAA) are compositionally biased toward pro residues. Residues 612 to 807 (HSVPDSSALP…AEPLFDLKVG (196 aa)) are interaction with ROCK1. The region spanning 616–1013 (DSSALPTKRK…YRERNKTRGR (398 aa)) is the FH2 domain. Threonine 690 carries the post-translational modification Phosphothreonine. Positions 884–921 (LTRCAKVDFEQLTENLGQLERRSRAAEESLRSLAKHEL) form a coiled coil. The disordered stretch occupies residues 1020 to 1143 (KFSGVAGEAP…NRKSLRRTLK (124 aa)). Low complexity predominate over residues 1028–1041 (APSNPSVPVAVSSG). In terms of domain architecture, DAD spans 1053-1133 (MKSLLTSRPE…AARERKRSRG (81 aa)). The segment covering 1073 to 1089 (MVQSSSPIMPTVGPSTA) has biased composition (polar residues). The segment covering 1127-1142 (ERKRSRGNRKSLRRTL) has biased composition (basic residues).

This sequence belongs to the formin homology family. Self-associates via the FH2 domain. Binds to F-actin via its N-terminus. Binds to the cytoplasmic domain of CD21 via its C-terminus. Interacts with ROCK1 in a Src-dependent manner. Post-translationally, phosphorylated by ROCK1. As to expression, ubiquitous. Highly expressed in spleen.

It is found in the cytoplasm. Its subcellular location is the cytoskeleton. The protein localises to the cell projection. It localises to the bleb. Functionally, required for the assembly of F-actin structures, such as stress fibers. Depends on the Rho-ROCK cascade for its activity. Contributes to the coordination of microtubules with actin fibers and plays a role in cell elongation. Acts synergistically with ROCK1 to promote SRC-dependent non-apoptotic plasma membrane blebbing. The polypeptide is FH1/FH2 domain-containing protein 1 (FHOD1) (Homo sapiens (Human)).